The primary structure comprises 110 residues: Large ribosomal subunit protein uL22 (110 aa).

Belongs to the universal ribosomal protein uL22 family. Part of the 50S ribosomal subunit.

In terms of biological role, this protein binds specifically to 23S rRNA; its binding is stimulated by other ribosomal proteins, e.g. L4, L17, and L20. It is important during the early stages of 50S assembly. It makes multiple contacts with different domains of the 23S rRNA in the assembled 50S subunit and ribosome. Functionally, the globular domain of the protein is located near the polypeptide exit tunnel on the outside of the subunit, while an extended beta-hairpin is found that lines the wall of the exit tunnel in the center of the 70S ribosome. The chain is Large ribosomal subunit protein uL22 from Teredinibacter turnerae (strain ATCC 39867 / T7901).